The following is a 557-amino-acid chain: Copine-6 (557 aa).

2 C2 domains span residues 1-127 and 134-263; these read MSDP…TKPL and NAGK…MQWD. Residues D167, D173, D229, D231, and D237 each contribute to the Ca(2+) site. The segment at 244–303 is linker region; that stretch reads STFQEMQEGTANPGQEMQWDCINPKYRDKKKHYKSSGTVVLAQCTVEKVHTFLDYIMGGC. Residues 306–526 enclose the VWFA domain; it reads SFTVAIDFTA…ALAKCVLAEV (221 aa).

It belongs to the copine family. As to quaternary structure, interacts (via second C2 domain) with OS9 (via C-terminus); this interaction occurs in a calcium-dependent manner in vitro. May interact with NECAB1. Ca(2+) serves as cofactor.

The protein resides in the cytoplasm. It is found in the cell membrane. Its subcellular location is the endosome. The protein localises to the cytoplasmic vesicle. It localises to the clathrin-coated vesicle. The protein resides in the perikaryon. It is found in the cell projection. Its subcellular location is the dendrite. Functionally, calcium-dependent phospholipid-binding protein that plays a role in calcium-mediated intracellular processes. Binds phospholipid membranes in a calcium-dependent manner. Plays a role in dendrite formation by melanocytes. This Bos taurus (Bovine) protein is Copine-6.